Here is a 237-residue protein sequence, read N- to C-terminus: N-demethylindolmycin N-methyltransferase (237 aa).

Belongs to the methyltransferase superfamily.

The catalysed reaction is N-demethylindolmycin + S-adenosyl-L-methionine = indolmycin + S-adenosyl-L-homocysteine + H(+). Functionally, involved in the biosynthesis of the antibiotic indolmycin, an inhibitor of the bacterial tryptophan-tRNA synthetases. Catalyzes the methylation of N-demethylindolmycin to yield indolmycin, with S-adenosylmethionine (AdoMet) acting as the methyl donor. The protein is N-demethylindolmycin N-methyltransferase of Streptomyces griseus.